The chain runs to 1021 residues: Contactin-1 (1021 aa).

An N-terminal signal peptide occupies residues 1–20 (MKTPLLVSHLLLISLTSCLG). 6 Ig-like C2-type domains span residues 41–131 (PIFE…ATLS), 137–223 (PFPP…KSVF), 241–326 (PADI…ARIY), 331–407 (PEWV…AELK), 413–500 (PTFE…GTLV), and 504–603 (PTRI…LVVR). 2 disulfide bridges follow: Cys65–Cys114 and Cys158–Cys211. Asn208 and Asn258 each carry an N-linked (GlcNAc...) asparagine glycan. An intrachain disulfide couples Cys263 to Cys310. N-linked (GlcNAc...) asparagine glycosylation occurs at Asn338. Disulfide bonds link Cys352–Cys391 and Cys436–Cys484. Residues Asn457, Asn473, Asn494, and Asn521 are each glycosylated (N-linked (GlcNAc...) asparagine). Cys526 and Cys585 form a disulfide bridge. The N-linked (GlcNAc...) asparagine glycan is linked to Asn593. 4 Fibronectin type-III domains span residues 608–706 (PPGG…TDGA), 711–808 (APSD…SAQD), 813–908 (APTE…APPS), and 909–1002 (QPPR…TLSS). The interval 695–719 (SIPSNRIKTDGAAPNVAPSDVGGGG) is disordered. The N-linked (GlcNAc...) asparagine glycan is linked to Asn935. Ser1001 carries GPI-anchor amidated serine lipidation. Positions 1002–1021 (SGLLSLLLPSLGFLVFYSEF) are cleaved as a propeptide — removed in mature form.

The protein belongs to the immunoglobulin superfamily. Contactin family. As to quaternary structure, monomer. Interacts with NOTCH1. Interacts with CNTNAP1 in cis form and TNR. Binds to the carbonic-anhydrase like domain of PTPRZ1. Detected in a complex with NRCAM and PTPRB. Interacts with TASOR. Expressed by neurons, oligodendrocytes and their progenitors (at protein level). Myelination regulates the expression being down-regulated when neurons are in contact with Schwann cells.

Its subcellular location is the cell membrane. Contactins mediate cell surface interactions during nervous system development. Involved in the formation of paranodal axo-glial junctions in myelinated peripheral nerves and in the signaling between axons and myelinating glial cells via its association with CNTNAP1. Participates in oligodendrocytes generation by acting as a ligand of NOTCH1. Its association with NOTCH1 promotes NOTCH1 activation through the released notch intracellular domain (NICD) and subsequent translocation to the nucleus. Interaction with TNR induces a repulsion of neurons and an inhibition of neurite outgrowth. This chain is Contactin-1 (Cntn1), found in Rattus norvegicus (Rat).